The following is a 251-amino-acid chain: Ly6/PLAUR domain-containing protein 5 (251 aa).

A signal peptide spans 1 to 25 (MAMGVPRVILLCLFGAALCLTGSQA). Residues asparagine 120 and asparagine 174 are each glycosylated (N-linked (GlcNAc...) asparagine). The region spanning 135 to 214 (CYACIGVHQD…GSCCEGYLCN (80 aa)) is the UPAR/Ly6 domain. The GPI-anchor amidated alanine moiety is linked to residue alanine 225. The propeptide at 226 to 251 (SATTPPRALQVLALLLPVLLLVGLSA) is removed in mature form.

It localises to the cell membrane. The polypeptide is Ly6/PLAUR domain-containing protein 5 (LYPD5) (Homo sapiens (Human)).